Reading from the N-terminus, the 408-residue chain is tRNA(Met) cytidine acetate ligase (408 aa).

Residues 7-20, Gly-102, Asn-170, and 195-196 each bind ATP; these read IVEYNPFHNGHKYH and RI.

It belongs to the TmcAL family.

It is found in the cytoplasm. It catalyses the reaction cytidine(34) in elongator tRNA(Met) + acetate + ATP = N(4)-acetylcytidine(34) in elongator tRNA(Met) + AMP + diphosphate. Its function is as follows. Catalyzes the formation of N(4)-acetylcytidine (ac(4)C) at the wobble position of elongator tRNA(Met), using acetate and ATP as substrates. First activates an acetate ion to form acetyladenylate (Ac-AMP) and then transfers the acetyl group to tRNA to form ac(4)C34. The chain is tRNA(Met) cytidine acetate ligase from Clostridium kluyveri (strain NBRC 12016).